A 382-amino-acid chain; its full sequence is Succinate--CoA ligase [ADP-forming] subunit beta (382 aa).

Residues K46, 53–55, V95, and E100 contribute to the ATP site; that span reads GRG. Residues N192 and D206 each coordinate Mg(2+). Substrate is bound by residues N257 and 314-316; that span reads GIT.

This sequence belongs to the succinate/malate CoA ligase beta subunit family. As to quaternary structure, heterotetramer of two alpha and two beta subunits. Mg(2+) serves as cofactor.

The catalysed reaction is succinate + ATP + CoA = succinyl-CoA + ADP + phosphate. It catalyses the reaction GTP + succinate + CoA = succinyl-CoA + GDP + phosphate. It functions in the pathway carbohydrate metabolism; tricarboxylic acid cycle; succinate from succinyl-CoA (ligase route): step 1/1. In terms of biological role, succinyl-CoA synthetase functions in the citric acid cycle (TCA), coupling the hydrolysis of succinyl-CoA to the synthesis of either ATP or GTP and thus represents the only step of substrate-level phosphorylation in the TCA. The beta subunit provides nucleotide specificity of the enzyme and binds the substrate succinate, while the binding sites for coenzyme A and phosphate are found in the alpha subunit. This is Succinate--CoA ligase [ADP-forming] subunit beta from Bacteroides fragilis (strain ATCC 25285 / DSM 2151 / CCUG 4856 / JCM 11019 / LMG 10263 / NCTC 9343 / Onslow / VPI 2553 / EN-2).